A 355-amino-acid polypeptide reads, in one-letter code: UDP-3-O-acylglucosamine N-acyltransferase (355 aa).

H258 serves as the catalytic Proton acceptor.

The protein belongs to the transferase hexapeptide repeat family. LpxD subfamily. As to quaternary structure, homotrimer.

It catalyses the reaction a UDP-3-O-[(3R)-3-hydroxyacyl]-alpha-D-glucosamine + a (3R)-hydroxyacyl-[ACP] = a UDP-2-N,3-O-bis[(3R)-3-hydroxyacyl]-alpha-D-glucosamine + holo-[ACP] + H(+). The protein operates within bacterial outer membrane biogenesis; LPS lipid A biosynthesis. Functionally, catalyzes the N-acylation of UDP-3-O-acylglucosamine using 3-hydroxyacyl-ACP as the acyl donor. Is involved in the biosynthesis of lipid A, a phosphorylated glycolipid that anchors the lipopolysaccharide to the outer membrane of the cell. This Bradyrhizobium sp. (strain ORS 278) protein is UDP-3-O-acylglucosamine N-acyltransferase.